Here is a 602-residue protein sequence, read N- to C-terminus: uncharacterized protein (602 aa).

This sequence belongs to the glycosyltransferase 2 family.

This is an uncharacterized protein from Rickettsia felis (strain ATCC VR-1525 / URRWXCal2) (Rickettsia azadi).